A 398-amino-acid polypeptide reads, in one-letter code: Galactose-3-O-sulfotransferase 2 (398 aa).

Residues 1–11 (MLSALGGLQRC) lie on the Cytoplasmic side of the membrane. Residues 12–29 (FWAILLLALTVSLLAGFL) traverse the membrane as a helical; Signal-anchor for type II membrane protein segment. Residues 30 to 398 (HKDVRLLMPL…PPKNIPFLGA (369 aa)) lie on the Lumenal side of the membrane. N-linked (GlcNAc...) asparagine glycans are attached at residues asparagine 77, asparagine 133, asparagine 180, asparagine 288, asparagine 330, and asparagine 360.

It belongs to the galactose-3-O-sulfotransferase family.

It is found in the golgi apparatus. It localises to the golgi stack membrane. It participates in protein modification; carbohydrate sulfation. Strongly inhibited by Cu(2+) and Zn(2+). Functionally, transfers a sulfate group to the hydroxyl group at C3 of non-reducing beta-galactosyl residues. Acts both on type 1 (Gal-beta-1,3-GlcNAc) and type 2 (Gal-beta-1,4-GlcNAc) chains with similar efficiency. In Sus scrofa (Pig), this protein is Galactose-3-O-sulfotransferase 2 (GAL3ST2).